Consider the following 267-residue polypeptide: Diaminopimelate epimerase (267 aa).

Substrate contacts are provided by Asn-15 and Asn-66. The active-site Proton donor is the Cys-75. Residues 76–77 (GN), Asn-150, Asn-183, and 201–202 (ER) each bind substrate. Cys-210 (proton acceptor) is an active-site residue. 211–212 (GT) lines the substrate pocket.

The protein belongs to the diaminopimelate epimerase family. In terms of assembly, homodimer.

It localises to the cytoplasm. It catalyses the reaction (2S,6S)-2,6-diaminopimelate = meso-2,6-diaminopimelate. Its pathway is amino-acid biosynthesis; L-lysine biosynthesis via DAP pathway; DL-2,6-diaminopimelate from LL-2,6-diaminopimelate: step 1/1. In terms of biological role, catalyzes the stereoinversion of LL-2,6-diaminopimelate (L,L-DAP) to meso-diaminopimelate (meso-DAP), a precursor of L-lysine and an essential component of the bacterial peptidoglycan. This is Diaminopimelate epimerase from Bacteroides thetaiotaomicron (strain ATCC 29148 / DSM 2079 / JCM 5827 / CCUG 10774 / NCTC 10582 / VPI-5482 / E50).